Here is a 115-residue protein sequence, read N- to C-terminus: Arsenic resistance transcriptional regulator ArsR2 (115 aa).

The HTH arsR-type domain maps to 1 to 90 (MITPPDVFKS…EMLQVTLQAN (90 aa)). Residues cysteine 30 and cysteine 32 each coordinate arsenite. Positions 31–54 (VCELMCALNDSQPKISRHLAQLRS) form a DNA-binding region, H-T-H motif.

Homodimer.

The protein localises to the cytoplasm. Its function is as follows. Binds arsenite and regulates the expression of arsenic efflux pumps. In vitro, also binds antimony and bismuth, but not arsenate. In Pseudomonas putida (strain ATCC 47054 / DSM 6125 / CFBP 8728 / NCIMB 11950 / KT2440), this protein is Arsenic resistance transcriptional regulator ArsR2.